Reading from the N-terminus, the 333-residue chain is Nucleoid-associated protein APL_0429 (333 aa).

Belongs to the YejK family.

The protein resides in the cytoplasm. It is found in the nucleoid. This Actinobacillus pleuropneumoniae serotype 5b (strain L20) protein is Nucleoid-associated protein APL_0429.